Consider the following 100-residue polypeptide: MLKMNLQLFAHKKGVGSSKNGRDSEAKRLGVKCADGQFVLAGNILVRQRGTKIHPGANVGKGGDDTLFAKIDGVVKYERLGRDKKKASVYPVNVEEVIAE.

The propeptide occupies 1–9 (MLKMNLQLF).

Belongs to the bacterial ribosomal protein bL27 family. The N-terminus is cleaved by ribosomal processing cysteine protease Prp.

The chain is Large ribosomal subunit protein bL27 from Clostridium perfringens (strain ATCC 13124 / DSM 756 / JCM 1290 / NCIMB 6125 / NCTC 8237 / Type A).